Consider the following 81-residue polypeptide: Sulfur carrier protein TusA (81 aa).

Cys19 serves as the catalytic Cysteine persulfide intermediate.

The protein belongs to the sulfur carrier protein TusA family.

Its subcellular location is the cytoplasm. Functionally, sulfur carrier protein which probably makes part of a sulfur-relay system. The chain is Sulfur carrier protein TusA from Shewanella piezotolerans (strain WP3 / JCM 13877).